Here is a 105-residue protein sequence, read N- to C-terminus: Protein LBH (105 aa).

The LBH domain maps to 18–104 (MTEVMMNTQP…CEETAKENKE (87 aa)). Residue serine 63 is modified to Phosphoserine. Residues 86-96 (LVQEDEQDNCE) are compositionally biased toward acidic residues. Residues 86 to 105 (LVQEDEQDNCEETAKENKEQ) are disordered.

Belongs to the LBH family. Highly expressed in heart, and expressed at low levels in placenta, lung, skeletal muscle, kidney and liver.

It localises to the nucleus. The protein localises to the cytoplasm. Its function is as follows. Transcriptional activator which may act in mitogen-activated protein kinase signaling pathway. This chain is Protein LBH, found in Homo sapiens (Human).